A 535-amino-acid chain; its full sequence is Cytochrome P450 4c3 (535 aa).

Residues Glu342 and Cys481 each contribute to the heme site.

The protein belongs to the cytochrome P450 family. Requires heme as cofactor.

Its subcellular location is the endoplasmic reticulum membrane. The protein localises to the microsome membrane. May be involved in the metabolism of insect hormones and in the breakdown of synthetic insecticides. In Drosophila melanogaster (Fruit fly), this protein is Cytochrome P450 4c3 (Cyp4c3).